The chain runs to 298 residues: MGQKIHPTGFRLSISRNWASRWYANDRDFAGMLAEDIKVREYLKAKLKNASVSRVLIERPAKNARITIFSARPGVVIGKKGEDIENLKRELSRQLGVPVAVNIEEVRKPEIDAKLIADSITQQLEKRIMFRRAMKRAMQNAMRLGALGIKIMSSGRLNGIEIARCEWYREGRVPLHTLRADIDYGTSEAQTTYGIIGVKVWVYKGDTLGRNDLPAAVEARTDEERRPRGPRRDDRGARPGADRPAPRVARRPPMGANTAPSDGSDKPAEATGAGAPKPAVQRVRKVAAPAAAADGKGE.

The 69-residue stretch at 39–107 (VREYLKAKLK…PVAVNIEEVR (69 aa)) folds into the KH type-2 domain. Residues 214-298 (PAAVEARTDE…PAAAADGKGE (85 aa)) form a disordered region. Residues 219–245 (ARTDEERRPRGPRRDDRGARPGADRPA) show a composition bias toward basic and acidic residues. Residues 277–298 (KPAVQRVRKVAAPAAAADGKGE) are compositionally biased toward low complexity.

It belongs to the universal ribosomal protein uS3 family. Part of the 30S ribosomal subunit. Forms a tight complex with proteins S10 and S14.

Binds the lower part of the 30S subunit head. Binds mRNA in the 70S ribosome, positioning it for translation. The polypeptide is Small ribosomal subunit protein uS3 (Albidiferax ferrireducens (strain ATCC BAA-621 / DSM 15236 / T118) (Rhodoferax ferrireducens)).